The sequence spans 333 residues: Probable G-protein coupled receptor 33 (333 aa).

Residues 1–30 (MDLINSTDYLINASTLVRNSTQFLAPASKM) are Extracellular-facing. Residues Asn-5, Asn-12, and Asn-19 are each glycosylated (N-linked (GlcNAc...) asparagine). The helical transmembrane segment at 31 to 53 (IIALSLYISSIIGTITNGLYLWV) threads the bilayer. The Cytoplasmic portion of the chain corresponds to 54-64 (LRFKMKQTVNT). A helical transmembrane segment spans residues 65–86 (LLFFHLILSYFISTMILPFMAT). Residues 87-103 (SQLQDNHWNFGTALCKV) lie on the Extracellular side of the membrane. Cys-101 and Cys-179 are joined by a disulfide. Residues 104–124 (FNGTLSLGMFTSVFFLSAIGL) form a helical membrane-spanning segment. Topologically, residues 125–143 (DRYLLTLHPVWSQQHRTPR) are cytoplasmic. Residues 144 to 165 (WASSIVLGVWISAAALSIPYLI) form a helical membrane-spanning segment. The Extracellular portion of the chain corresponds to 166–209 (FRQTHHDRKGKVTCQNNYAVSTNWESKEMQALRQWIHVACFISR). Residues 210–230 (FLLGFLLPFFIIIFCYERVAS) form a helical membrane-spanning segment. Topologically, residues 231–246 (KVKERSLFKSSKPFKV) are cytoplasmic. The chain crosses the membrane as a helical span at residues 247–268 (MMTAIISFFVCWMPYHIHQGLL). Residues 269-283 (LTMNQSLLLELTLIL) lie on the Extracellular side of the membrane. N-linked (GlcNAc...) asparagine glycosylation occurs at Asn-272. The helical transmembrane segment at 284 to 303 (TVLTTSFNTIFSPTLYLFVG) threads the bilayer. Residues 304–333 (ENFKKVFKKSILALFESTFSEDSSVERTQT) lie on the Cytoplasmic side of the membrane.

Belongs to the G-protein coupled receptor 1 family.

It localises to the cell membrane. Functionally, orphan receptor; could be a chemoattractant receptor. In Pan paniscus (Pygmy chimpanzee), this protein is Probable G-protein coupled receptor 33 (GPR33).